The chain runs to 1622 residues: DNA (cytosine-5)-methyltransferase 1 (1622 aa).

An interaction with DNMT3A region spans residues 1 to 145; it reads MPARTAPARV…RRSKSDSETM (145 aa). Interaction with the PRC2/EED-EZH2 complex regions lie at residues 1 to 342 and 304 to 610; these read MPAR…VERK and TPEP…TVIN. Position 15 is a phosphoserine (S15). Residues 16 to 109 form the DMAP1-binding domain; that stretch reads PAGSLPDHVR…TQKANGCPAN (94 aa). The residue at position 70 (K70) is an N6,N6-dimethyllysine; by EHMT2. Positions 100–360 are disordered; the sequence is TQKANGCPAN…IPKLNPPQCP (261 aa). The segment covering 126–137 has biased composition (basic residues); the sequence is PRSRPKPRGPRR. S138 bears the Phosphoserine mark. The residue at position 139 (K139) is an N6-methyllysine; by SETD7. S140 carries the phosphoserine; by PKB/AKT1 modification. Residues 146 to 213 form an interaction with DNMT3B region; the sequence is IEASSSSVAT…TESRASRAGE (68 aa). 2 positions are modified to phosphoserine: S149 and S151. Residues 149-166 are compositionally biased toward low complexity; that stretch reads SSSSVATRRTTRQTTITS. At T163 the chain carries Phosphothreonine. K169 is subject to N6-acetyllysine. Positions 173-200 match the Nuclear localization signal motif; that stretch reads KRKPKEDSEKGNANESAAEERDQDKKRR. 4 stretches are compositionally biased toward basic and acidic residues: residues 176–197, 207–222, 237–269, and 276–300; these read PKED…DQDK, RASR…ERVR, DDRR…THLD, and KDKR…KEEV. A Phosphothreonine modification is found at T304. The DNA replication foci-targeting sequence stretch occupies residues 327 to 556; it reads KPEPLSIPVQ…NVNRFTEDSL (230 aa). Positions 359 and 362 each coordinate Zn(2+). N6-acetyllysine is present on K372. A Phosphoserine modification is found at S400. Zn(2+) contacts are provided by C420 and H424. Phosphoserine occurs at positions 515 and 555. Residues 650-696 form a CXXC-type zinc finger; that stretch reads NTMKRRRCGVCEVCQQPECGKCKACKDMVKFGGTGRSKQACLKRRCP. Zn(2+) contacts are provided by C657, C660, C663, C668, C671, C674, C690, and C695. The interval 697-758 is autoinhibitory linker; sequence NLAVKEADED…TYYWKVSIDE (62 aa). A disordered region spans residues 702-733; it reads EADEDEEADDDIPELPSPKKLHQGKKKKQNKD. Residues 703-714 are compositionally biased toward acidic residues; the sequence is ADEDEEADDDIP. S718 carries the phosphoserine modification. Over residues 720–731 the composition is skewed to basic residues; sequence KKLHQGKKKKQN. The residue at position 736 (S736) is a Phosphoserine. The residue at position 753 (K753) is an N6-acetyllysine. The 126-residue stretch at 759–884 folds into the BAH 1 domain; the sequence is ETLEVGDCVS…QDYARFESPP (126 aa). Position 882 is a phosphoserine (S882). N6-acetyllysine is present on residues K895, K961, and K980. Residues 977–1105 form the BAH 2 domain; that stretch reads TYRKYSDYIK…SKTKSFEDPP (129 aa). The interval 1099–1138 is disordered; sequence KSFEDPPNHARSPGNKGKGKGKGKGKGKPQVSEPKEPEAA. 6 tandem repeats follow at residues 1114–1115, 1116–1117, 1118–1119, 1120–1121, 1122–1123, and 1124–1125. The interval 1114-1127 is 7 X 2 AA tandem repeats of K-G; the sequence is KGKGKGKGKGKGKP. A compositionally biased stretch (basic residues) spans 1115 to 1125; the sequence is GKGKGKGKGKG. N6-acetyllysine occurs at positions 1116, 1118, 1120, 1122, 1124, and 1126. The stretch at 1126–1127 is one 7; approximate repeat; the sequence is KP. The tract at residues 1126–1622 is interaction with the PRC2/EED-EZH2 complex; that stretch reads KPQVSEPKEP…KGKEETTTED (497 aa). The 460-residue stretch at 1144-1603 folds into the SAM-dependent MTase C5-type domain; the sequence is LRTLDVFSGC…LEIKLCLLAS (460 aa). Residues 1144–1622 form a catalytic region; that stretch reads LRTLDVFSGC…KGKEETTTED (479 aa). Residues S1151, 1155–1156, 1173–1174, 1195–1196, and C1196 contribute to the S-adenosyl-L-methionine site; these read GL, EM, and DC. The active site involves C1231. K1354 carries the post-translational modification N6-acetyllysine. At S1436 the chain carries Phosphoserine. Residues N1582 and V1584 each coordinate S-adenosyl-L-methionine. A Glycyl lysine isopeptide (Lys-Gly) (interchain with G-Cter in SUMO2) cross-link involves residue K1613.

The protein belongs to the class I-like SAM-binding methyltransferase superfamily. C5-methyltransferase family. Homodimer. Forms a stable complex with E2F1, BB1 and HDAC1. Forms a complex with DMAP1 and HDAC2, with direct interaction. Interacts with the PRC2/EED-EZH2 complex. Probably part of a corepressor complex containing ZNF304, TRIM28, SETDB1 and DNMT1. Interacts with UHRF1; promoting its recruitment to hemimethylated DNA. Interacts with USP7, promoting its deubiquitination. Interacts with PCNA. Interacts with MBD2 and MBD3. Interacts with DNMT3A and DNMT3B. Interacts with UBC9. Interacts with CSNK1D. Interacts with HDAC1. Interacts with BAZ2A/TIP5. Interacts with SIRT7. Interacts with ZNF263; recruited to the SIX3 promoter along with other proteins involved in chromatin modification and transcriptional corepression where it contributes to transcriptional repression. Interacts with L3MBTL3 and DCAF5; the interaction requires DNMT1 methylation at Lys-139 and is necessary to target DNMT1 for ubiquitination by the CRL4-DCAF5 E3 ubiquitin ligase complex and proteasomal degradation. Interacts with PHF20L1; the interaction requires DNMT1 methylation at Lys-139 and protects DNMT1 from ubiquitination and proteasomal degradation. Sumoylated; sumoylation increases activity. In terms of processing, acetylation on multiple lysines, mainly by KAT2B/PCAF, regulates cell cycle G(2)/M transition. Deacetylation of Lys-1116 and Lys-1354 by SIRT1 increases methyltransferase activity. Post-translationally, phosphorylation of Ser-151 by CDKs is important for enzymatic activity and protein stability. Phosphorylation of Ser-140 by AKT1 prevents methylation by SETD7 thereby increasing DNMT1 stability. Methylation at Lys-139 by SETD7 is necessary for the regulation of DNMT1 proteasomal degradation. In terms of processing, ubiquitinated by UHRF1; interaction with USP7 counteracts ubiquitination by UHRF1 by promoting deubiquitination and preventing degradation by the proteasome. In terms of tissue distribution, isoforms 0 and 8 are highly expressed in placenta, brain, lung, spleen, kidney, heart, and at much lower levels in liver. Isoform 1 is expressed in cerebellum, isoform 2 in muscle and testis, isoform 3 in lung, isoform 4 in spleen and brain, and isoform 5 in brain.

The protein localises to the nucleus. The catalysed reaction is a 2'-deoxycytidine in DNA + S-adenosyl-L-methionine = a 5-methyl-2'-deoxycytidine in DNA + S-adenosyl-L-homocysteine + H(+). Functionally, methylates CpG residues. Preferentially methylates hemimethylated DNA. Associates with DNA replication sites in S phase maintaining the methylation pattern in the newly synthesized strand, that is essential for epigenetic inheritance. Associates with chromatin during G2 and M phases to maintain DNA methylation independently of replication. It is responsible for maintaining methylation patterns established in development. DNA methylation is coordinated with methylation of histones. Mediates transcriptional repression by direct binding to HDAC2. In association with DNMT3B and via the recruitment of CTCFL/BORIS, involved in activation of BAG1 gene expression by modulating dimethylation of promoter histone H3 at H3K4 and H3K9. Probably forms a corepressor complex required for activated KRAS-mediated promoter hypermethylation and transcriptional silencing of tumor suppressor genes (TSGs) or other tumor-related genes in colorectal cancer (CRC) cells. Also required to maintain a transcriptionally repressive state of genes in undifferentiated embryonic stem cells (ESCs). Associates at promoter regions of tumor suppressor genes (TSGs) leading to their gene silencing. Promotes tumor growth. This chain is DNA (cytosine-5)-methyltransferase 1 (Dnmt1), found in Rattus norvegicus (Rat).